A 93-amino-acid chain; its full sequence is Small ribosomal subunit protein uS17 (93 aa).

It belongs to the universal ribosomal protein uS17 family. As to quaternary structure, part of the 30S ribosomal subunit.

Its function is as follows. One of the primary rRNA binding proteins, it binds specifically to the 5'-end of 16S ribosomal RNA. The protein is Small ribosomal subunit protein uS17 of Rhodococcus jostii (strain RHA1).